A 112-amino-acid polypeptide reads, in one-letter code: Histone H2A, sperm (112 aa).

At Q91 the chain carries N5-methylglutamine. Residue K106 forms a Glycyl lysine isopeptide (Lys-Gly) (interchain with G-Cter in ubiquitin) linkage.

Belongs to the histone H2A family. As to quaternary structure, the nucleosome is a histone octamer containing two molecules each of H2A, H2B, H3 and H4 assembled in one H3-H4 heterotetramer and two H2A-H2B heterodimers. The octamer wraps approximately 147 bp of DNA. Monoubiquitination gives a specific tag for epigenetic transcriptional repression.

The protein resides in the nucleus. The protein localises to the chromosome. Core component of nucleosome. Nucleosomes wrap and compact DNA into chromatin, limiting DNA accessibility to the cellular machineries which require DNA as a template. Histones thereby play a central role in transcription regulation, DNA repair, DNA replication and chromosomal stability. DNA accessibility is regulated via a complex set of post-translational modifications of histones, also called histone code, and nucleosome remodeling. This Lytechinus pictus (Painted sea urchin) protein is Histone H2A, sperm.